The sequence spans 666 residues: Vicilin-like antimicrobial peptides 2-2 (666 aa).

The first 27 residues, 1-27, serve as a signal peptide directing secretion; that stretch reads MAINTSNLCSLLFLLSLFLLSTTVSLA. 2 disordered regions span residues 161–191 and 221–251; these read QQKR…DPQQ and RQHG…SDNP. A compositionally biased stretch (basic and acidic residues) spans 239–251; the sequence is RYEEGEEKQSDNP. Cupin type-1 domains are found at residues 271–410 and 455–625; these read SVLE…ERLR and YNLF…KEVE.

This sequence belongs to the 7S seed storage protein family.

It is found in the secreted. Functionally, antimicrobial peptides 2b, 2c and 2d have antibacterial and antifungal activity against a range of species. The polypeptide is Vicilin-like antimicrobial peptides 2-2 (Macadamia integrifolia (Macadamia nut)).